A 149-amino-acid polypeptide reads, in one-letter code: Large ribosomal subunit protein bL9 (149 aa).

The protein belongs to the bacterial ribosomal protein bL9 family.

Functionally, binds to the 23S rRNA. The sequence is that of Large ribosomal subunit protein bL9 from Histophilus somni (strain 129Pt) (Haemophilus somnus).